The chain runs to 455 residues: C4-dicarboxylate transport protein (455 aa).

Transmembrane regions (helical) follow at residues 20–40 (HLYF…HFYP), 59–79 (MIIA…MGTL), 91–111 (GYFL…ANVI), 160–180 (GNIL…ILIG), 209–229 (PIGA…ASVV), 231–251 (LATL…VVLG), 344–364 (LLLV…AGFI), and 367–387 (AATL…ILGV).

This sequence belongs to the dicarboxylate/amino acid:cation symporter (DAACS) (TC 2.A.23) family.

The protein localises to the cell inner membrane. In terms of biological role, responsible for the transport of dicarboxylates such as succinate, fumarate, and malate from the periplasm across the membrane. The sequence is that of C4-dicarboxylate transport protein from Paracoccus denitrificans (strain Pd 1222).